The chain runs to 1099 residues: MPAKGRYFLNEGDEGPDQAALYEKYRLTSLHGPLLLLLLLVAAATCIALISIAFSHEDLRRHQVVLGTAFLMLTLFVALYVLVYVECLVQRWLRALALLTWACLMVLGSVLMWDSLENEAHAWEQVPFFLFVVFVVYALLPLSRRAAIVAGVTSTVSHLLVFGAVTRAFQTSMSSTQLGLQLLANAVILLGGNFTGAFHKHQLQDASRDLFIYTVKCIQIRRKLRVEKRQQENLLLSVLPAHISMGMKLAIIERLKEGGDRHYMPDNNFHSLYVKRHQNVSILYADIVGFTRLASDCSPKELVVVLNELFGKFDQIAKANECMRIKILGDCYYCVSGLPVSLPTHARNCVKMGLDICEAIKQVREATGVDISMRVGIHSGNVLCGVIGLRKWQYDVWSHDVSLANRMEAAGVPGRVHITEATLNHLDKAYEVEDGHGEQRDPYLKEMNIRTYLVIDPRSQQPPPPSHHLSKPKGDATLKMRASVRVTRYLESWGAARPFAHLNHRESVSSSETPISNGRRQKAIPLRRHRAPDRSASPKGRLEDDCDDEMLSAIEGLSSTRPCCSKSDDFHTFGPIFLEKGFEREYRLVPIPRARYDFACASLVFVCILLVHLLVMPRMATLGVSFGLVACLLGLVLSFCFATEFSRCFPSRSTLQAISESVETQPLVRLVLVVLTVGSLLTVAIINMPLTLNPGPEQPGDNKTSPLAAQNRVGTPCELLPYYTCSCILGFIACSVFLRMSLELKAMLLTVALVAYLLLFNLSPCWHVSGNSTETNGTQRTRLLLSDAQSMPSHTLAPGARETAPSPSYLERDLKIMVNFYLILFYATLILLSRQIDYYCRLDCLWKKKFKKEHEEFETMENVNRLLLENVLPAHVAAHFIGDKAAEDWYHQSYDCVCVMFASVPDFKVFYTECDVNKEGLECLRLLNEIIADFDELLLKPKFSGVEKIKTIGSTYMAAAGLSAPSGHENQDLERKHVHIGVLVEFSMALMSKLDGINRHSFNSFRLRVGINHGPVIAGVIGARKPQYDIWGNTVNVASRMESTGELGKIQVTEETCTILQGLGYSCECRGLINVKGKGELRTYFVCTDTAKFQGLGLN.

The Cytoplasmic segment spans residues 1-33; sequence MPAKGRYFLNEGDEGPDQAALYEKYRLTSLHGP. Helical transmembrane passes span 34–54, 63–83, 95–117, 122–142, 147–167, and 178–198; these read LLLLLLLVAAATCIALISIAF, QVVLGTAFLMLTLFVALYVLV, ALALLTWACLMVLGSVLMWDSLE, AWEQVPFFLFVVFVVYALLPL, AIVAGVTSTVSHLLVFGAVTR, and LGLQLLANAVILLGGNFTGAF. The Cytoplasmic portion of the chain corresponds to 199 to 595; the sequence is HKHQLQDASR…YRLVPIPRAR (397 aa). Positions 286, 287, and 330 each coordinate Mg(2+). ATP-binding positions include 286–291, 328–330, and R374; these read DIVGFT and LGD. The interval 456–476 is disordered; it reads DPRSQQPPPPSHHLSKPKGDA. Residues 479-484 are mediates regulation of adenylate cyclase activity by C5 alpha-induced G- beta and gamma pathway; it reads KMRASV. Residues 493–501 are mediates regulation of adenylate cyclase activity by sphingosine 1-phosphate-induced G alpha 13 pathway; that stretch reads WGAARPFAH. Positions 504 to 543 are disordered; it reads HRESVSSSETPISNGRRQKAIPLRRHRAPDRSASPKGRLE. Over residues 508-518 the composition is skewed to polar residues; it reads VSSSETPISNG. The interval 508 to 585 is modulates adenylate cyclase activity by modulating the binding of G(s)alpha to the high-affinity G(s)alpha binding site in 7C1a/7C2; it reads VSSSETPISN…IFLEKGFERE (78 aa). Positions 519 to 531 are enriched in basic residues; sequence RRQKAIPLRRHRA. The next 3 helical transmembrane spans lie at 596 to 616, 621 to 641, and 670 to 689; these read YDFACASLVFVCILLVHLLVM, TLGVSFGLVACLLGLVLSFCF, and LVLVVLTVGSLLTVAIINMP. Residue N702 is glycosylated (N-linked (GlcNAc...) asparagine). 3 helical membrane passes run 719–738, 747–766, and 813–833; these read LLPYYTCSCILGFIACSVFL, MLLTVALVAYLLLFNLSPCW, and DLKIMVNFYLILFYATLILLS. At 834 to 1099 the chain is on the cytoplasmic side; that stretch reads RQIDYYCRLD…TAKFQGLGLN (266 aa). ATP contacts are provided by residues K950, 1029 to 1031, 1036 to 1040, and K1076; these read DIW and NVASR.

This sequence belongs to the adenylyl cyclase class-4/guanylyl cyclase family. The cofactor is Mg(2+). Requires Mn(2+) as cofactor. Phosphorylated by PRKCD. In terms of tissue distribution, most abundant in heart, spleen and lung.

The protein resides in the membrane. The catalysed reaction is ATP = 3',5'-cyclic AMP + diphosphate. With respect to regulation, activated by the G protein alpha subunit. Activated by the G protein beta and gamma subunit complex. Activated by GNA13 and GNA12. Ethanol and phorbol 12,13-dibutanoate significantly potentiate adenylate cyclase activity generated in response to the activation of the prostanoid receptor by the agonist prostaglandin E1(1-) in a PKC-dependent manner. Inhibited by lithium. Catalyzes the formation of cAMP in response to activation of G protein-coupled receptors. Functions in signaling cascades activated namely by thrombin and sphingosine 1-phosphate and mediates regulation of cAMP synthesis through synergistic action of the stimulatory G alpha protein with GNA13. Also, during inflammation, mediates zymosan-induced increase intracellular cAMP, leading to protein kinase A pathway activation in order to modulate innate immune responses through heterotrimeric G proteins G(12/13). Functions in signaling cascades activated namely by dopamine and C5 alpha chain and mediates regulation of cAMP synthesis through synergistic action of the stimulatory G protein with G beta:gamma complex. Functions, through cAMP response regulation, to keep inflammation under control during bacterial infection by sensing the presence of serum factors, such as the bioactive lysophospholipid (LPA) that regulate LPS-induced TNF-alpha production. However, it is also required for the optimal functions of B and T cells during adaptive immune responses by regulating cAMP synthesis in both B and T cells. This chain is Adenylate cyclase type 7, found in Mus musculus (Mouse).